The chain runs to 331 residues: Phosphoenolpyruvate transferase (331 aa).

Aspartate 63 contributes to the 7,8-didemethyl-8-hydroxy-5-deazariboflavin binding site.

This sequence belongs to the CofD family. In terms of assembly, homodimer. It depends on Mg(2+) as a cofactor.

It carries out the reaction enolpyruvoyl-2-diphospho-5'-guanosine + 7,8-didemethyl-8-hydroxy-5-deazariboflavin = dehydro coenzyme F420-0 + GMP + H(+). The protein operates within cofactor biosynthesis; coenzyme F420 biosynthesis. Its function is as follows. Catalyzes the transfer of the phosphoenolpyruvate moiety from enoylpyruvoyl-2-diphospho-5'-guanosine (EPPG) to 7,8-didemethyl-8-hydroxy-5-deazariboflavin (FO) with the formation of dehydro coenzyme F420-0 and GMP. The sequence is that of Phosphoenolpyruvate transferase from Mycobacterium sp. (strain JLS).